Consider the following 432-residue polypeptide: Enolase (432 aa).

Residue Gln-167 participates in (2R)-2-phosphoglycerate binding. Glu-209 acts as the Proton donor in catalysis. The Mg(2+) site is built by Asp-246, Glu-289, and Asp-316. Residues Lys-341, Arg-370, Ser-371, and Lys-392 each contribute to the (2R)-2-phosphoglycerate site. Lys-341 (proton acceptor) is an active-site residue.

It belongs to the enolase family. It depends on Mg(2+) as a cofactor.

It localises to the cytoplasm. The protein localises to the secreted. Its subcellular location is the cell surface. The catalysed reaction is (2R)-2-phosphoglycerate = phosphoenolpyruvate + H2O. It participates in carbohydrate degradation; glycolysis; pyruvate from D-glyceraldehyde 3-phosphate: step 4/5. Functionally, catalyzes the reversible conversion of 2-phosphoglycerate (2-PG) into phosphoenolpyruvate (PEP). It is essential for the degradation of carbohydrates via glycolysis. The protein is Enolase of Thermotoga neapolitana (strain ATCC 49049 / DSM 4359 / NBRC 107923 / NS-E).